Consider the following 102-residue polypeptide: Anti-lipopolysaccharide factor (102 aa).

Cys32 and Cys53 are joined by a disulfide.

Its function is as follows. Binds tightly to LPS and thus specifically inhibits the LPS-mediated activation of the hemolymph coagulation. It has a strong antibacterial effect especially on the growth of Gram-negative bacteria. The chain is Anti-lipopolysaccharide factor from Tachypleus tridentatus (Japanese horseshoe crab).